The sequence spans 431 residues: Histidinol dehydrogenase (431 aa).

NAD(+) is bound by residues Tyr127, Gln190, and Asn213. Residues Ser238, Gln260, and His263 each coordinate substrate. The Zn(2+) site is built by Gln260 and His263. Residues Glu329 and His330 each act as proton acceptor in the active site. Substrate is bound by residues His330, Asp363, Glu417, and His422. A Zn(2+)-binding site is contributed by Asp363. His422 is a Zn(2+) binding site.

This sequence belongs to the histidinol dehydrogenase family. The cofactor is Zn(2+).

It carries out the reaction L-histidinol + 2 NAD(+) + H2O = L-histidine + 2 NADH + 3 H(+). It functions in the pathway amino-acid biosynthesis; L-histidine biosynthesis; L-histidine from 5-phospho-alpha-D-ribose 1-diphosphate: step 9/9. Catalyzes the sequential NAD-dependent oxidations of L-histidinol to L-histidinaldehyde and then to L-histidine. This is Histidinol dehydrogenase from Methanopyrus kandleri (strain AV19 / DSM 6324 / JCM 9639 / NBRC 100938).